We begin with the raw amino-acid sequence, 187 residues long: Elongation factor P (187 aa).

Belongs to the elongation factor P family.

It localises to the cytoplasm. The protein operates within protein biosynthesis; polypeptide chain elongation. In terms of biological role, involved in peptide bond synthesis. Stimulates efficient translation and peptide-bond synthesis on native or reconstituted 70S ribosomes in vitro. Probably functions indirectly by altering the affinity of the ribosome for aminoacyl-tRNA, thus increasing their reactivity as acceptors for peptidyl transferase. This Helicobacter acinonychis (strain Sheeba) protein is Elongation factor P.